Here is a 134-residue protein sequence, read N- to C-terminus: Bradykinin-related peptides (134 aa).

An N-terminal signal peptide occupies residues 1–22 (MAFLKKSLFLVLFLGVVSLSFC). 3 consecutive propeptides follow at residues 23–44 (EEEK…ESLG), 71–82 (RSISGLTPIRLS), and 99–121 (ISEA…PLRG). A compositionally biased stretch (basic and acidic residues) spans 24–33 (EEKREEHEEE). The segment at 24–71 (EEKREEHEEEKRDEEDAESLGKRYGGLSPLRISKRVPPGFTPFRSPAR) is disordered. Pro126 is subject to 4-hydroxyproline; partial; in form [Hyp3]-bradykinin and [Hyp3]-bradykinin-Val,Asp.

The protein belongs to the frog skin active peptide (FSAP) family. Bradykinin-related peptide subfamily. Expressed by the skin glands. Expression levels in inguinal glands are much higher than in granular glands.

Its subcellular location is the secreted. In terms of biological role, may produce in vitro relaxation of rat arterial smooth muscle and constriction of intestinal smooth muscle. May target bradykinin receptors (BDKRB). The protein is Bradykinin-related peptides of Physalaemus nattereri (Cuyaba dwarf frog).